We begin with the raw amino-acid sequence, 370 residues long: Phosphate acyltransferase (370 aa).

Residues 349-370 are disordered; it reads SAGRAGQDAPDEMAAPGRSEKR.

This sequence belongs to the PlsX family. In terms of assembly, homodimer. Probably interacts with PlsY.

It localises to the cytoplasm. The catalysed reaction is a fatty acyl-[ACP] + phosphate = an acyl phosphate + holo-[ACP]. It functions in the pathway lipid metabolism; phospholipid metabolism. In terms of biological role, catalyzes the reversible formation of acyl-phosphate (acyl-PO(4)) from acyl-[acyl-carrier-protein] (acyl-ACP). This enzyme utilizes acyl-ACP as fatty acyl donor, but not acyl-CoA. This Cereibacter sphaeroides (strain ATCC 17023 / DSM 158 / JCM 6121 / CCUG 31486 / LMG 2827 / NBRC 12203 / NCIMB 8253 / ATH 2.4.1.) (Rhodobacter sphaeroides) protein is Phosphate acyltransferase.